The chain runs to 625 residues: 1-deoxy-D-xylulose-5-phosphate synthase (625 aa).

Residues histidine 80 and 121 to 123 each bind thiamine diphosphate; that span reads GHS. Aspartate 152 is a Mg(2+) binding site. Thiamine diphosphate contacts are provided by residues 153–154, asparagine 181, tyrosine 290, and glutamate 371; that span reads GA. Asparagine 181 is a Mg(2+) binding site.

It belongs to the transketolase family. DXPS subfamily. In terms of assembly, homodimer. Mg(2+) is required as a cofactor. Thiamine diphosphate serves as cofactor.

The catalysed reaction is D-glyceraldehyde 3-phosphate + pyruvate + H(+) = 1-deoxy-D-xylulose 5-phosphate + CO2. It participates in metabolic intermediate biosynthesis; 1-deoxy-D-xylulose 5-phosphate biosynthesis; 1-deoxy-D-xylulose 5-phosphate from D-glyceraldehyde 3-phosphate and pyruvate: step 1/1. Functionally, catalyzes the acyloin condensation reaction between C atoms 2 and 3 of pyruvate and glyceraldehyde 3-phosphate to yield 1-deoxy-D-xylulose-5-phosphate (DXP). The sequence is that of 1-deoxy-D-xylulose-5-phosphate synthase from Haemophilus influenzae (strain 86-028NP).